The following is a 458-amino-acid chain: Argininosuccinate lyase (458 aa).

It belongs to the lyase 1 family. Argininosuccinate lyase subfamily.

The protein resides in the cytoplasm. It catalyses the reaction 2-(N(omega)-L-arginino)succinate = fumarate + L-arginine. It participates in amino-acid biosynthesis; L-arginine biosynthesis; L-arginine from L-ornithine and carbamoyl phosphate: step 3/3. In Neisseria meningitidis serogroup C (strain 053442), this protein is Argininosuccinate lyase.